The following is a 370-amino-acid chain: S-adenosylmethionine:tRNA ribosyltransferase-isomerase (370 aa).

It belongs to the QueA family. In terms of assembly, monomer.

It localises to the cytoplasm. The catalysed reaction is 7-aminomethyl-7-carbaguanosine(34) in tRNA + S-adenosyl-L-methionine = epoxyqueuosine(34) in tRNA + adenine + L-methionine + 2 H(+). It participates in tRNA modification; tRNA-queuosine biosynthesis. In terms of biological role, transfers and isomerizes the ribose moiety from AdoMet to the 7-aminomethyl group of 7-deazaguanine (preQ1-tRNA) to give epoxyqueuosine (oQ-tRNA). This Prochlorococcus marinus (strain SARG / CCMP1375 / SS120) protein is S-adenosylmethionine:tRNA ribosyltransferase-isomerase.